Here is a 37-residue protein sequence, read N- to C-terminus: Myo-inositol-binding protein (37 aa).

It belongs to the bacterial solute-binding protein 2 family.

Its subcellular location is the periplasm. The chain is Myo-inositol-binding protein from Pseudomonas sp.